The chain runs to 509 residues: Maturase K (509 aa).

It belongs to the intron maturase 2 family. MatK subfamily.

The protein resides in the plastid. It localises to the chloroplast. In terms of biological role, usually encoded in the trnK tRNA gene intron. Probably assists in splicing its own and other chloroplast group II introns. The protein is Maturase K of Atropa belladonna (Belladonna).